We begin with the raw amino-acid sequence, 274 residues long: uncharacterized protein (274 aa).

This is an uncharacterized protein from Methanocaldococcus jannaschii (strain ATCC 43067 / DSM 2661 / JAL-1 / JCM 10045 / NBRC 100440) (Methanococcus jannaschii).